The primary structure comprises 291 residues: Elongation factor Ts (291 aa).

The interval 79-82 is involved in Mg(2+) ion dislocation from EF-Tu; it reads TDFV.

The protein belongs to the EF-Ts family.

It localises to the cytoplasm. Its function is as follows. Associates with the EF-Tu.GDP complex and induces the exchange of GDP to GTP. It remains bound to the aminoacyl-tRNA.EF-Tu.GTP complex up to the GTP hydrolysis stage on the ribosome. This Stenotrophomonas maltophilia (strain K279a) protein is Elongation factor Ts.